We begin with the raw amino-acid sequence, 189 residues long: MVKVIASSVRKGNVLDVDGKLYVVLTAQNFHPGKGTPVTQVDMRRIVDGTKVSERWRTTEQVERAFVEDLNFQFLYEDGEGFHFMNPENYDQVVVDVETMGDQKAYLQEGMTCVLSIHEGNPLAVELPRHVTLEIVETEPVVKGQTASSSYKPAILSNGIRTMVPPHIDAGIRVVIATEDNSYVERAKN.

Belongs to the elongation factor P family.

It is found in the cytoplasm. It functions in the pathway protein biosynthesis; polypeptide chain elongation. Its function is as follows. Involved in peptide bond synthesis. Stimulates efficient translation and peptide-bond synthesis on native or reconstituted 70S ribosomes in vitro. Probably functions indirectly by altering the affinity of the ribosome for aminoacyl-tRNA, thus increasing their reactivity as acceptors for peptidyl transferase. The protein is Elongation factor P of Rhizobium radiobacter (Agrobacterium tumefaciens).